The chain runs to 230 residues: Orotidine 5'-phosphate decarboxylase (230 aa).

Substrate contacts are provided by residues Asp10, Lys32, 59–68 (DLKYHDIPNT), Thr119, Arg180, Gln189, Gly209, and Arg210. Lys61 acts as the Proton donor in catalysis.

This sequence belongs to the OMP decarboxylase family. Type 1 subfamily. In terms of assembly, homodimer.

The catalysed reaction is orotidine 5'-phosphate + H(+) = UMP + CO2. Its pathway is pyrimidine metabolism; UMP biosynthesis via de novo pathway; UMP from orotate: step 2/2. Functionally, catalyzes the decarboxylation of orotidine 5'-monophosphate (OMP) to uridine 5'-monophosphate (UMP). This Actinobacillus pleuropneumoniae serotype 5b (strain L20) protein is Orotidine 5'-phosphate decarboxylase.